We begin with the raw amino-acid sequence, 355 residues long: Phosphoribosylformylglycinamidine cyclo-ligase (355 aa).

It belongs to the AIR synthase family.

It is found in the cytoplasm. The enzyme catalyses 2-formamido-N(1)-(5-O-phospho-beta-D-ribosyl)acetamidine + ATP = 5-amino-1-(5-phospho-beta-D-ribosyl)imidazole + ADP + phosphate + H(+). It participates in purine metabolism; IMP biosynthesis via de novo pathway; 5-amino-1-(5-phospho-D-ribosyl)imidazole from N(2)-formyl-N(1)-(5-phospho-D-ribosyl)glycinamide: step 2/2. This is Phosphoribosylformylglycinamidine cyclo-ligase from Hamiltonella defensa subsp. Acyrthosiphon pisum (strain 5AT).